Consider the following 266-residue polypeptide: CD82 antigen (266 aa).

The Cytoplasmic portion of the chain corresponds to 1–11 (MGAGCVKVTKY). Cys-5 carries S-palmitoyl cysteine lipidation. A helical membrane pass occupies residues 12–32 (FLFLFNLLFFILGAVILGFGV). Over 33-53 (WILADKSSFISVLQTSSSSLQ) the chain is Extracellular. Residues 54-72 (VGAYVFIGVGAITMLMGFL) traverse the membrane as a helical segment. Topologically, residues 73-83 (GCIGAVNEVRC) are cytoplasmic. A lipid anchor (S-palmitoyl cysteine) is attached at Cys-74. A helical transmembrane segment spans residues 84 to 110 (LLGLYFVFLLLILIAQVTVEVLFYFNA). Residues 111–227 (NKLKQEMGNT…KAQAWLQENF (117 aa)) are Extracellular-facing. Asn-127, Asn-131, Asn-157, Asn-166, and Asn-197 each carry an N-linked (GlcNAc...) asparagine glycan. The chain crosses the membrane as a helical span at residues 228-249 (GILLGVCAGVAVIELLGLFLSI). Over 250-266 (CLCRYIHSEDYSKVPKY) the chain is Cytoplasmic.

The protein belongs to the tetraspanin (TM4SF) family. In terms of assembly, forms homooligomers. Interacts directly with IGSF8. Interacts with EGFR. Interacts with VEGFA and PDGFA. Interacts with ITGA4. Interacts with ITGA6; this interaction reduces ITGA6 cell surface expression. Interacts with ITGB1. Interacts with TLR4; this interaction inhibits TLR4-mediated signaling pathway. Interacts with TLR9. Interacts with PLAUR. Palmitoylated. Palmitoylation contributes to oligomerization and surface expression.

It localises to the cell membrane. Functionally, structural component of specialized membrane microdomains known as tetraspanin-enriched microdomains (TERMs), which act as platforms for receptor clustering and signaling. Participates thereby in diverse biological functions such as cell signal transduction, adhesion, migration and protein trafficking. Acts as a attenuator of EGF signaling, facilitating ligand-induced endocytosis of the receptor and its subsequent desensitization. Mechanistically, modulates ligand-induced ubiquitination and trafficking of EGFR via E3 ligase CBL phosphorylation by PKC. Increases cell-matrix adhesion by regulating the membrane organization of integrin alpha4/ITA4. Modulates adhesion and suppresses cell migration through other integrins such as the alpha6/ITGA6 and beta1/ITGB1. Decreases cell-associated plasminogen activation by interfering with the interaction between urokinase-type plasminogen activator/PLAU and its receptor PLAUR. Associates with CD4 or CD8 and delivers costimulatory signals for the TCR/CD3 pathway. Plays a role in the restrains phagocyte migration but supports macrophage activation. Plays a role in TLR9 trafficking to acidified CpG-containing compartments by controlling interaction between TLR9 and VAMP3 and subsequent myddosome assembly. Inhibits LPS-induced inflammatory response by preventing binding of LPS to TLR4 on the cell surface. Plays a role in the activation of macrophages into anti-inflammatory phenotypes. Independently of Toll-like receptor (TLR) signaling, is recruited to pathogen-containing phagosomes prior to fusion with lysosomes and participates in antigen presentation. Also acts to control angiogenesis and switch angiogenic milieu to quiescent state by binding and sequestering VEGFA and PDGFA to inhibit the signaling they trigger via their respective cell surface receptor. The chain is CD82 antigen (Cd82) from Rattus norvegicus (Rat).